The primary structure comprises 470 residues: ATP synthase subunit beta (470 aa).

151 to 158 (GGAGVGKT) lines the ATP pocket.

Belongs to the ATPase alpha/beta chains family. In terms of assembly, F-type ATPases have 2 components, CF(1) - the catalytic core - and CF(0) - the membrane proton channel. CF(1) has five subunits: alpha(3), beta(3), gamma(1), delta(1), epsilon(1). CF(0) has three main subunits: a(1), b(2) and c(9-12). The alpha and beta chains form an alternating ring which encloses part of the gamma chain. CF(1) is attached to CF(0) by a central stalk formed by the gamma and epsilon chains, while a peripheral stalk is formed by the delta and b chains.

It is found in the cell membrane. The enzyme catalyses ATP + H2O + 4 H(+)(in) = ADP + phosphate + 5 H(+)(out). Its function is as follows. Produces ATP from ADP in the presence of a proton gradient across the membrane. The catalytic sites are hosted primarily by the beta subunits. This chain is ATP synthase subunit beta, found in Mycoplasma mobile (strain ATCC 43663 / 163K / NCTC 11711) (Mesomycoplasma mobile).